Here is a 783-residue protein sequence, read N- to C-terminus: MASKPSKQVTVEVNNGRSRSRSRPRSQSRGRDKSVKITVNSRNKGRRQNGRNKHQSNQRVRNIVNKQLRKQGVTGPKPAICQRATATLGTVGSNTSGTTEIEACILLNPVLVKDATGSTQFGPVQALGAQYSMWKLKYLNVKLTSMVGSSAVNGTVVRVSLNPTSTPSSTSWSGLGARKHLDVTVGKNAVFKLKPADLGGPRDGWWLTNTNDNASDTLGPSIEIHTLGRTMSSYQNQQFTGGLFLVELASEWCFTGYAANPNLVNLMKSTDKQVNVTFNGSAGEPLVMSVPATSHFVRAVVARSTLPTSLARAGERTTSDTVWQVLNTAVSAAELVTPPPFNWLVKGGWWFVKLIAGRTRNGTRSFYVYPSYQDALSNKPAICTGGLPSGLRAASAVATTLQFTQMNQPSLGHGENTATLGRSIATAGDRLKVILTVGQPVTPNENNKQTWVGKTNTPTEEVVKIGVNTQNYNVMNGFTMISSIDWYDEEMQPLEVPVPMSELLVMKGINKKADVYAAQQYKNSISNNKHQITSVYLVRVKENFQVTNHLSYFFREKVDTTATELMKIRPQTYYTTVNFVQNNWYLLTSTVLHTGSLPSGWVWMNQELMNNENYIVDQGMKHLMTTPPVSSQLYFEMLTSLPQAMAEHFDQGDQAVVAHDSPGQALFSAEETDSDFESTEDETDEVDRFDLHLSSESDDDDVENNRVTLLSTLINQGMSVERATRITSNAFPTRAARLRRSVYNDLLVSGLGPDAAWSHACEQARKVGDNHDLQASGSRGHAE.

Polar residues predominate over residues 1–16; it reads MASKPSKQVTVEVNNG. The segment at 1–58 is disordered; that stretch reads MASKPSKQVTVEVNNGRSRSRSRPRSQSRGRDKSVKITVNSRNKGRRQNGRNKHQSNQ. Positions 1-69 are basic; it reads MASKPSKQVT…VRNIVNKQLR (69 aa). Composition is skewed to basic residues over residues 18–28 and 43–56; these read SRSRSRPRSQS and NKGRRQNGRNKHQS. The inner core stretch occupies residues 70–262; the sequence is KQGVTGPKPA…CFTGYAANPN (193 aa). The interval 393–422 is core attachment; that stretch reads AASAVATTLQFTQMNQPSLGHGENTATLGR. The segment at 423 to 645 is P2 globular domain; it reads SIATAGDRLK…EMLTSLPQAM (223 aa). The interval 646-783 is acidic; sequence AEHFDQGDQA…QASGSRGHAE (138 aa).

This sequence belongs to the astroviridae capsid polyprotein family. As to quaternary structure, heterodimer with spike protein VP27. The spikes form a globular dimer with 30 spikes covering the mature virion. Spike protein VP25 that lacks the core attachment region may need to dimerize with spike protein VP27 to remain stably bound to the viral particle. In terms of assembly, heterodimer with spike protein VP25. The spikes form a globular dimer with 30 spikes covering the mature virion. Spike protein VP25 that lacks the core attachment region may need to dimerize with spike protein VP27 to remain stably bound to the viral particle. Post-translationally, specific enzymatic cleavages by the host yield mature proteins. VP90 acidic C-terminal domain is eliminated from the immature virion by host caspases during viral maturation giving rise to virions composed of VP70. The virus can then dissociate from cellular membranes and exit the cell. Further cleavages by host extracellular proteases occur resulting in the three structural proteins VP34, VP27 and VP25 and conferring infectivity.

It localises to the virion. The protein resides in the host extracellular space. The capsid polyprotein VP90 self-assembles and undergoes a proteolytic cleavage by host caspases to yield the immature VP70 virion. Functionally, the immature virion is composed of 180 VP70 subunits with 90 dimeric spikes and displays a T=3 icosahedral symmetry. During maturation, VP70 undergoes a loss of 60 peripentonal spikes, which likely plays an important role in viral infectivity. In terms of biological role, self-assembles to form an icosahedral capsid with a T=3 symmetry, about 43 nm in diameter. This forms contains only 30 spikes located on the icosahedral 2-fold axes. Its function is as follows. VP25 and VP27 Forms the spikes at the surface of the virion. This forms contains only 30 spikes located on the icosahedral 2-fold axes. Plays a role in the attachment to target host cell. This attachment induces virion internalization through clathrin-dependent endocytosis. The chain is Capsid polyprotein VP90 from Homo sapiens (Human).